Here is a 391-residue protein sequence, read N- to C-terminus: S-adenosylmethionine synthase (391 aa).

Histidine 16 provides a ligand contact to ATP. Aspartate 18 provides a ligand contact to Mg(2+). Glutamate 44 provides a ligand contact to K(+). L-methionine is bound by residues glutamate 57 and glutamine 101. Residues 101–111 form a flexible loop region; it reads QSADIAQGVDA. Residues 166 to 168, aspartate 244, 250 to 251, alanine 267, and lysine 271 each bind ATP; these read DAK and RK. Residue aspartate 244 coordinates L-methionine. An L-methionine-binding site is contributed by lysine 275.

It belongs to the AdoMet synthase family. In terms of assembly, homotetramer; dimer of dimers. Mg(2+) is required as a cofactor. K(+) serves as cofactor.

It is found in the cytoplasm. The catalysed reaction is L-methionine + ATP + H2O = S-adenosyl-L-methionine + phosphate + diphosphate. It functions in the pathway amino-acid biosynthesis; S-adenosyl-L-methionine biosynthesis; S-adenosyl-L-methionine from L-methionine: step 1/1. In terms of biological role, catalyzes the formation of S-adenosylmethionine (AdoMet) from methionine and ATP. The overall synthetic reaction is composed of two sequential steps, AdoMet formation and the subsequent tripolyphosphate hydrolysis which occurs prior to release of AdoMet from the enzyme. In Zymomonas mobilis subsp. mobilis (strain ATCC 31821 / ZM4 / CP4), this protein is S-adenosylmethionine synthase.